An 846-amino-acid chain; its full sequence is MAVKRLIETFVPENYKIFLDIDRKTKKIKGQVAITGEAKDSVIAFHAKGLHFSKVRAFSVDTNFIENEEDEEIVVKIGETGRVTVSFEYEAELTDNMMGIYPSYYEVNGEKKMLIGTQFESHFARQAFPSIDEPEAKATFDLSVKFDEEEGDIIVSNMPELLNINGIHVFERTVKMSSYLLAFVFGELQFKKGKTKSGVEVGAFATKDHSEAALDFPLDIAIRSIEFYEDYYKTPYPLPHSWHIALPDFSAGAMENWGCITYREVCMLVDPENATIQSKQYVATVIAHELAHQWFGDLVTMQWWDDLWLNESFANNMEYVCMDALEPSWNVWESFSISEANMALNRDATDGVQSVHVEVTHPDEIGTLFDPAIVYAKGSRLMVMLRKWLGDEDFAAGLALYFKRHQYGNTVGDNLWDALAEVSGKDVAAFMHSWVNQPGYPVVTAEVIDDTLVLSQKQFFVGEGADKGRLWNVPLNTNWSGLPDLLSSEKVEIPGFAALKAKNDGKALFLNDANMAHYIIDYKGQLLTDLLSEVETLENVTKFQILQDRKLLAKAGVISYADVVNILPAFTNEESYLVNTGLSQLISELELFVDEDSETEKAFQSLVGKLFAKNYARLGWDKVAGESAGDESLRGIVLSKTLYAENADAKAKASQIFAAHKENLAGIPADIRPIVLNNEIKTTNSAELVKTYRETYVKTSLQEFKRELEGAVALIKDEKVIAELLESFKNADIVKPQDIAFSWFYLLRNDFSQDAAWAWEKANWAFLEEKLGGDMSYDKFVIYPGNTFKTADKLAEYKAFFEPKLENQGLKRSIEMAIKQITARVALIDSQKADVDKSIKEISEKL.

Substrate contacts are provided by residues glutamate 120 and 252 to 256 (GAMEN). Histidine 288 contributes to the Zn(2+) binding site. Glutamate 289 serves as the catalytic Proton acceptor. Zn(2+) is bound by residues histidine 292 and glutamate 311.

It belongs to the peptidase M1 family. As to quaternary structure, monomer. It depends on Zn(2+) as a cofactor.

Its subcellular location is the cytoplasm. It catalyses the reaction Release of an N-terminal amino acid, Xaa-|-Yaa- from a peptide, amide or arylamide. Xaa is preferably Ala, but may be most amino acids including Pro (slow action). When a terminal hydrophobic residue is followed by a prolyl residue, the two may be released as an intact Xaa-Pro dipeptide.. Aminopeptidase with broad substrate specificity to several peptides. It has more affinity for oligopeptides than for dipeptides. It plays an essential role in the metabolism, it may be involved in nitrogen supply or protein turnover. The sequence is that of Aminopeptidase N (pepN) from Lactococcus lactis subsp. lactis (strain IL1403) (Streptococcus lactis).